The sequence spans 423 residues: Adenylosuccinate synthetase (423 aa).

Residues 12 to 18 (GDEGKGK) and 40 to 42 (GHT) contribute to the GTP site. The Proton acceptor role is filled by D13. D13 and G40 together coordinate Mg(2+). Residues 13 to 16 (DEGK), 38 to 41 (NAGH), T129, R143, Q224, T239, and R303 contribute to the IMP site. Residue H41 is the Proton donor of the active site. A substrate-binding site is contributed by 299 to 305 (SVTGRQR). Residues R305, 331 to 333 (KGD), and 412 to 414 (SVG) each bind GTP.

This sequence belongs to the adenylosuccinate synthetase family. As to quaternary structure, homodimer. Mg(2+) serves as cofactor.

The protein resides in the cytoplasm. The enzyme catalyses IMP + L-aspartate + GTP = N(6)-(1,2-dicarboxyethyl)-AMP + GDP + phosphate + 2 H(+). The protein operates within purine metabolism; AMP biosynthesis via de novo pathway; AMP from IMP: step 1/2. Plays an important role in the de novo pathway of purine nucleotide biosynthesis. Catalyzes the first committed step in the biosynthesis of AMP from IMP. In Flavobacterium johnsoniae (strain ATCC 17061 / DSM 2064 / JCM 8514 / BCRC 14874 / CCUG 350202 / NBRC 14942 / NCIMB 11054 / UW101) (Cytophaga johnsonae), this protein is Adenylosuccinate synthetase.